The following is a 185-amino-acid chain: uncharacterized protein (185 aa).

It belongs to the PIGL family.

This is an uncharacterized protein from Escherichia coli (strain K12).